A 581-amino-acid chain; its full sequence is Proline--tRNA ligase (581 aa).

This sequence belongs to the class-II aminoacyl-tRNA synthetase family. ProS type 1 subfamily. As to quaternary structure, homodimer.

The protein resides in the cytoplasm. It catalyses the reaction tRNA(Pro) + L-proline + ATP = L-prolyl-tRNA(Pro) + AMP + diphosphate. In terms of biological role, catalyzes the attachment of proline to tRNA(Pro) in a two-step reaction: proline is first activated by ATP to form Pro-AMP and then transferred to the acceptor end of tRNA(Pro). As ProRS can inadvertently accommodate and process non-cognate amino acids such as alanine and cysteine, to avoid such errors it has two additional distinct editing activities against alanine. One activity is designated as 'pretransfer' editing and involves the tRNA(Pro)-independent hydrolysis of activated Ala-AMP. The other activity is designated 'posttransfer' editing and involves deacylation of mischarged Ala-tRNA(Pro). The misacylated Cys-tRNA(Pro) is not edited by ProRS. The protein is Proline--tRNA ligase of Acidovorax ebreus (strain TPSY) (Diaphorobacter sp. (strain TPSY)).